A 56-amino-acid polypeptide reads, in one-letter code: Large ribosomal subunit protein bL33C (56 aa).

This sequence belongs to the bacterial ribosomal protein bL33 family.

The polypeptide is Large ribosomal subunit protein bL33C (Sorangium cellulosum (strain So ce56) (Polyangium cellulosum (strain So ce56))).